The sequence spans 293 residues: Probable porphobilinogen deaminase (293 aa).

Cysteine 233 is subject to S-(dipyrrolylmethanemethyl)cysteine.

This sequence belongs to the HMBS family. The cofactor is dipyrromethane.

It catalyses the reaction 4 porphobilinogen + H2O = hydroxymethylbilane + 4 NH4(+). It functions in the pathway porphyrin-containing compound metabolism; protoporphyrin-IX biosynthesis; coproporphyrinogen-III from 5-aminolevulinate: step 2/4. Tetrapolymerization of the monopyrrole PBG into the hydroxymethylbilane pre-uroporphyrinogen in several discrete steps. This is Probable porphobilinogen deaminase from Saccharolobus islandicus (strain Y.N.15.51 / Yellowstone #2) (Sulfolobus islandicus).